Here is a 202-residue protein sequence, read N- to C-terminus: Imidazoleglycerol-phosphate dehydratase (202 aa).

It belongs to the imidazoleglycerol-phosphate dehydratase family.

It localises to the cytoplasm. It catalyses the reaction D-erythro-1-(imidazol-4-yl)glycerol 3-phosphate = 3-(imidazol-4-yl)-2-oxopropyl phosphate + H2O. The protein operates within amino-acid biosynthesis; L-histidine biosynthesis; L-histidine from 5-phospho-alpha-D-ribose 1-diphosphate: step 6/9. The sequence is that of Imidazoleglycerol-phosphate dehydratase from Synechococcus sp. (strain CC9605).